The primary structure comprises 573 residues: Protein FAM227B (573 aa).

Positions 429 to 485 form a coiled coil; it reads DNKKDFKRVKQRIKDDIKFLKEQQEQIDKELDRLQAKASKNLQEVKNDFENFLHKLR. Positions 497–521 are enriched in low complexity; it reads SASPSESLQSLQSPNSSLSSPAMSE. Positions 497–528 are disordered; it reads SASPSESLQSLQSPNSSLSSPAMSEDFNSVEE.

The protein belongs to the FAM227 family.

This is Protein FAM227B (Fam227b) from Rattus norvegicus (Rat).